The following is a 531-amino-acid chain: 2,3-bisphosphoglycerate-independent phosphoglycerate mutase (531 aa).

2 residues coordinate Mn(2+): Asp-13 and Ser-63. Ser-63 (phosphoserine intermediate) is an active-site residue. Residues His-124, 154–155, Arg-187, Arg-193, 261–264, and Lys-342 contribute to the substrate site; these read RD and RPDR. Residues Asp-420, His-424, Asp-462, His-463, and His-480 each coordinate Mn(2+).

It belongs to the BPG-independent phosphoglycerate mutase family. Monomer. Requires Mn(2+) as cofactor.

The enzyme catalyses (2R)-2-phosphoglycerate = (2R)-3-phosphoglycerate. It participates in carbohydrate degradation; glycolysis; pyruvate from D-glyceraldehyde 3-phosphate: step 3/5. In terms of biological role, catalyzes the interconversion of 2-phosphoglycerate and 3-phosphoglycerate. This chain is 2,3-bisphosphoglycerate-independent phosphoglycerate mutase, found in Mycoplasma mycoides subsp. mycoides SC (strain CCUG 32753 / NCTC 10114 / PG1).